Here is a 350-residue protein sequence, read N- to C-terminus: Mannonate dehydratase (350 aa).

This sequence belongs to the mannonate dehydratase family. Requires Fe(2+) as cofactor. It depends on Mn(2+) as a cofactor.

It carries out the reaction D-mannonate = 2-dehydro-3-deoxy-D-gluconate + H2O. It functions in the pathway carbohydrate metabolism; pentose and glucuronate interconversion. In terms of biological role, catalyzes the dehydration of D-mannonate. The sequence is that of Mannonate dehydratase from Clostridium perfringens (strain 13 / Type A).